The following is an 819-amino-acid chain: Kinesin-like protein KIN-13A (819 aa).

The interval 150–178 (EPFEPSPFIPKEMDEDDDDMLPGSQPGPS) is disordered. The Kinesin motor domain maps to 199–535 (KIKVVVRKRP…LRYADRVKSL (337 aa)). 289 to 296 (GQTGSGKT) serves as a coordination point for ATP. Positions 534 to 729 (SLSKGSNTRK…QSEKESSCDD (196 aa)) are disordered. Residues 550-562 (TIPSSKDSSSAPS) show a composition bias toward low complexity. 2 stretches are compositionally biased toward basic and acidic residues: residues 577–589 (QEKR…RKAA) and 614–631 (RGKE…ERVD). Polar residues predominate over residues 632–652 (LNSSRISYNSKPQSVQSSANL). The segment covering 669–686 (YRDDKPERQSNYAKKDSG) has biased composition (basic and acidic residues). Residues 697–719 (QQAKQLQQQQRPTSASASQNSSR) are compositionally biased toward low complexity. The stretch at 736 to 767 (LEEEEALIAAHRKEIENTMEIVREEMNLLAEV) forms a coiled coil.

Belongs to the TRAFAC class myosin-kinesin ATPase superfamily. Kinesin family. KIN-13 subfamily. Ubiquitous.

It is found in the microsome. The polypeptide is Kinesin-like protein KIN-13A (Oryza sativa subsp. japonica (Rice)).